The primary structure comprises 164 residues: Thiol peroxidase (164 aa).

The region spanning 18–163 is the Thioredoxin domain; sequence INEGDFAPDF…FDAALAAYKN (146 aa). Cys-60 acts as the Cysteine sulfenic acid (-SOH) intermediate in catalysis. An intrachain disulfide couples Cys-60 to Cys-93.

Belongs to the peroxiredoxin family. Tpx subfamily. Homodimer.

The catalysed reaction is a hydroperoxide + [thioredoxin]-dithiol = an alcohol + [thioredoxin]-disulfide + H2O. Its function is as follows. Thiol-specific peroxidase that catalyzes the reduction of hydrogen peroxide and organic hydroperoxides to water and alcohols, respectively. Plays a role in cell protection against oxidative stress by detoxifying peroxides. This chain is Thiol peroxidase, found in Staphylococcus aureus (strain COL).